We begin with the raw amino-acid sequence, 274 residues long: Dermonecrotic toxin SdSicTox-betaIIB1bii (274 aa).

Histidine 5 is a catalytic residue. Mg(2+) contacts are provided by glutamate 25 and aspartate 27. Histidine 41 (nucleophile) is an active-site residue. 2 cysteine pairs are disulfide-bonded: cysteine 45–cysteine 51 and cysteine 47–cysteine 190. Aspartate 85 is a Mg(2+) binding site.

This sequence belongs to the arthropod phospholipase D family. Class II subfamily. Requires Mg(2+) as cofactor. Expressed by the venom gland.

The protein resides in the secreted. The catalysed reaction is an N-(acyl)-sphingosylphosphocholine = an N-(acyl)-sphingosyl-1,3-cyclic phosphate + choline. It carries out the reaction an N-(acyl)-sphingosylphosphoethanolamine = an N-(acyl)-sphingosyl-1,3-cyclic phosphate + ethanolamine. The enzyme catalyses a 1-acyl-sn-glycero-3-phosphocholine = a 1-acyl-sn-glycero-2,3-cyclic phosphate + choline. It catalyses the reaction a 1-acyl-sn-glycero-3-phosphoethanolamine = a 1-acyl-sn-glycero-2,3-cyclic phosphate + ethanolamine. In terms of biological role, dermonecrotic toxins cleave the phosphodiester linkage between the phosphate and headgroup of certain phospholipids (sphingolipid and lysolipid substrates), forming an alcohol (often choline) and a cyclic phosphate. This toxin acts on sphingomyelin (SM). It may also act on ceramide phosphoethanolamine (CPE), lysophosphatidylcholine (LPC) and lysophosphatidylethanolamine (LPE), but not on lysophosphatidylserine (LPS), and lysophosphatidylglycerol (LPG). It acts by transphosphatidylation, releasing exclusively cyclic phosphate products as second products. Induces dermonecrosis, hemolysis, increased vascular permeability, edema, inflammatory response, and platelet aggregation. The chain is Dermonecrotic toxin SdSicTox-betaIIB1bii from Sicarius cf. damarensis (strain GJB-2008) (Six-eyed sand spider).